The following is a 433-amino-acid chain: Probable M18 family aminopeptidase 2 (433 aa).

The Zn(2+) site is built by H79, H153, and H404.

Belongs to the peptidase M18 family. It depends on Zn(2+) as a cofactor.

This chain is Probable M18 family aminopeptidase 2 (apeB), found in Mycobacterium bovis (strain ATCC BAA-935 / AF2122/97).